A 520-amino-acid chain; its full sequence is Cytochrome P450 monooxygenase 176 (520 aa).

Residue Asn-6 is glycosylated (N-linked (GlcNAc...) asparagine). The chain crosses the membrane as a helical span at residues 10–27; sequence LLVVAGALFLTFLTTRFI. N-linked (GlcNAc...) asparagine glycosylation is found at Asn-141 and Asn-270. Cys-445 is a binding site for heme. Residue Asn-517 is glycosylated (N-linked (GlcNAc...) asparagine).

It belongs to the cytochrome P450 family. Requires heme as cofactor.

The protein localises to the membrane. It participates in secondary metabolite biosynthesis. Functionally, cytochrome P450 monooxygenase that is able to use delta(6)-protoilludene as a substrate to produce delta(6)-protoilludene-5-ol and an unidentified hydroxyprotoilludene. Is also able to use phenanthrene as a substrate for oxidation. In Postia placenta (strain ATCC 44394 / Madison 698-R) (Brown rot fungus), this protein is Cytochrome P450 monooxygenase 176.